Here is a 611-residue protein sequence, read N- to C-terminus: Phosphomethylpyrimidine synthase (611 aa).

Substrate contacts are provided by residues Asn-218, Met-247, Tyr-276, His-312, 332 to 334 (SRG), 373 to 376 (DGLR), and Glu-412. A Zn(2+)-binding site is contributed by His-416. Residue Tyr-439 coordinates substrate. His-480 contributes to the Zn(2+) binding site. [4Fe-4S] cluster is bound by residues Cys-560, Cys-563, and Cys-568.

Belongs to the ThiC family. As to quaternary structure, homodimer. The cofactor is [4Fe-4S] cluster.

It catalyses the reaction 5-amino-1-(5-phospho-beta-D-ribosyl)imidazole + S-adenosyl-L-methionine = 4-amino-2-methyl-5-(phosphooxymethyl)pyrimidine + CO + 5'-deoxyadenosine + formate + L-methionine + 3 H(+). It participates in cofactor biosynthesis; thiamine diphosphate biosynthesis. Its function is as follows. Catalyzes the synthesis of the hydroxymethylpyrimidine phosphate (HMP-P) moiety of thiamine from aminoimidazole ribotide (AIR) in a radical S-adenosyl-L-methionine (SAM)-dependent reaction. The chain is Phosphomethylpyrimidine synthase from Caulobacter sp. (strain K31).